We begin with the raw amino-acid sequence, 247 residues long: Probable transcriptional regulatory protein LPC_0711 (247 aa).

The protein belongs to the TACO1 family.

Its subcellular location is the cytoplasm. The sequence is that of Probable transcriptional regulatory protein LPC_0711 from Legionella pneumophila (strain Corby).